The sequence spans 121 residues: Protransforming growth factor alpha (121 aa).

L1 is a signal peptide. Positions 2-16 are cleaved as a propeptide — removed in mature form; the sequence is ENSTSLLSDPPVAAA. The Extracellular segment spans residues 2 to 75; it reads ENSTSLLSDP…AVVAASQKKQ (74 aa). Residue N3 is glycosylated (N-linked (GlcNAc...) asparagine). The 41-residue stretch at 20–60 folds into the EGF-like domain; sequence HFNDCPDSHTQFCFHGTCRFLVQEDRPACVCHSGYVGARCE. Disulfide bonds link C24/C37, C32/C48, and C50/C59. Residues 67-121 constitute a propeptide, removed in mature form; that stretch reads VVAASQKKQAITALVVVSIVALAVLIITCVLIHCCQVRKHCEWCRALICRHEKPS. Residues 76–101 form a helical membrane-spanning segment; it reads AITALVVVSIVALAVLIITCVLIHCC.

As to quaternary structure, interacts with the PDZ domains of MAGI3, SDCBP and SNTA1. The interaction with SDCBP, is required for the targeting to the cell surface. In the endoplasmic reticulum, in its immature form (i.e. with a prosegment and lacking full N-glycosylation), interacts with CNIH. In the Golgi apparatus, may form a complex with CNIH and GORASP2. Interacts (via cytoplasmic C-terminal domain) with NKD2. Hypothalamus.

The protein localises to the secreted. It is found in the extracellular space. It localises to the cell membrane. TGF alpha is a mitogenic polypeptide that is able to bind to the EGF receptor/EGFR and to act synergistically with TGF beta to promote anchorage-independent cell proliferation in soft agar. This is Protransforming growth factor alpha (TGFA) from Macaca mulatta (Rhesus macaque).